We begin with the raw amino-acid sequence, 251 residues long: Pyrroloquinoline-quinone synthase (251 aa).

The protein belongs to the PqqC family.

The enzyme catalyses 6-(2-amino-2-carboxyethyl)-7,8-dioxo-1,2,3,4,7,8-hexahydroquinoline-2,4-dicarboxylate + 3 O2 = pyrroloquinoline quinone + 2 H2O2 + 2 H2O + H(+). It participates in cofactor biosynthesis; pyrroloquinoline quinone biosynthesis. Functionally, ring cyclization and eight-electron oxidation of 3a-(2-amino-2-carboxyethyl)-4,5-dioxo-4,5,6,7,8,9-hexahydroquinoline-7,9-dicarboxylic-acid to PQQ. The polypeptide is Pyrroloquinoline-quinone synthase (Pseudomonas putida (strain ATCC 700007 / DSM 6899 / JCM 31910 / BCRC 17059 / LMG 24140 / F1)).